Reading from the N-terminus, the 394-residue chain is Elongation factor Tu (394 aa).

In terms of domain architecture, tr-type G spans Lys-10–Lys-204. The interval Gly-19–Thr-26 is G1. GTP is bound at residue Gly-19–Thr-26. Residue Thr-26 coordinates Mg(2+). The interval Gly-60–Asn-64 is G2. The G3 stretch occupies residues Asp-81 to Gly-84. GTP-binding positions include Asp-81–His-85 and Asn-136–Asp-139. Positions Asn-136–Asp-139 are G4. Residues Ser-174 to Leu-176 are G5.

It belongs to the TRAFAC class translation factor GTPase superfamily. Classic translation factor GTPase family. EF-Tu/EF-1A subfamily. Monomer.

The protein resides in the cytoplasm. It catalyses the reaction GTP + H2O = GDP + phosphate + H(+). Functionally, GTP hydrolase that promotes the GTP-dependent binding of aminoacyl-tRNA to the A-site of ribosomes during protein biosynthesis. The chain is Elongation factor Tu from Wigglesworthia glossinidia brevipalpis.